Consider the following 91-residue polypeptide: Pyruvate kinase (91 aa).

Residue R48 coordinates substrate. N50, S52, D82, and T83 together coordinate K(+). 50–53 provides a ligand contact to ATP; the sequence is NFSH. Position 89 (R89) interacts with ATP.

The protein belongs to the pyruvate kinase family. Homotetramer. The cofactor is Mg(2+). K(+) serves as cofactor.

The catalysed reaction is pyruvate + ATP = phosphoenolpyruvate + ADP + H(+). It functions in the pathway carbohydrate degradation; glycolysis; pyruvate from D-glyceraldehyde 3-phosphate: step 5/5. This chain is Pyruvate kinase, found in Leishmania braziliensis.